Consider the following 152-residue polypeptide: Transcriptional regulator MraZ (152 aa).

2 consecutive SpoVT-AbrB domains span residues 7-54 and 83-126; these read INSI…TMDE and ASEM…SQEA.

This sequence belongs to the MraZ family. In terms of assembly, forms oligomers.

It is found in the cytoplasm. Its subcellular location is the nucleoid. The sequence is that of Transcriptional regulator MraZ from Hydrogenovibrio crunogenus (strain DSM 25203 / XCL-2) (Thiomicrospira crunogena).